The chain runs to 665 residues: tRNA 5-methylaminomethyl-2-thiouridine biosynthesis bifunctional protein MnmC (665 aa).

Positions 1–235 are tRNA (mnm(5)s(2)U34)-methyltransferase; the sequence is MTITRHAQID…KWEVLRGTFI (235 aa). The FAD-dependent cmnm(5)s(2)U34 oxidoreductase stretch occupies residues 266–665; it reads IGAGLAGCAT…RGKGKQTVGH (400 aa).

The protein in the N-terminal section; belongs to the methyltransferase superfamily. tRNA (mnm(5)s(2)U34)-methyltransferase family. It in the C-terminal section; belongs to the DAO family. The cofactor is FAD.

The protein resides in the cytoplasm. It carries out the reaction 5-aminomethyl-2-thiouridine(34) in tRNA + S-adenosyl-L-methionine = 5-methylaminomethyl-2-thiouridine(34) in tRNA + S-adenosyl-L-homocysteine + H(+). In terms of biological role, catalyzes the last two steps in the biosynthesis of 5-methylaminomethyl-2-thiouridine (mnm(5)s(2)U) at the wobble position (U34) in tRNA. Catalyzes the FAD-dependent demodification of cmnm(5)s(2)U34 to nm(5)s(2)U34, followed by the transfer of a methyl group from S-adenosyl-L-methionine to nm(5)s(2)U34, to form mnm(5)s(2)U34. This chain is tRNA 5-methylaminomethyl-2-thiouridine biosynthesis bifunctional protein MnmC, found in Pseudomonas syringae pv. syringae (strain B728a).